The following is a 1019-amino-acid chain: Photoactivated adenylate cyclase subunit alpha-like protein ST- (1019 aa).

The 94-residue stretch at 55 to 148 (LRRLMYLSAS…GRMYGEWHMK (94 aa)) folds into the BLUF 1 domain. The Guanylate cyclase 1 domain maps to 204 to 332 (VLTFIYLVEF…DCINTASRIT (129 aa)). In terms of domain architecture, BLUF 2 spans 467–559 (LITLTYISQA…RVYGTPLDMT (93 aa)). One can recognise a Guanylate cyclase 2 domain in the interval 615–744 (VMLATDICSF…EVSARVMAVE (130 aa)). Disordered regions lie at residues 801-846 (EDHL…TRPH), 887-923 (QIAA…DQPA), and 963-993 (EGHR…NRAT). Residues 821 to 834 (RHQRPGPGRPRRGH) show a composition bias toward basic residues.

This sequence belongs to the adenylyl cyclase class-4/guanylyl cyclase family. In terms of assembly, heterotetramer of two alpha and two beta subunits.

Its subcellular location is the cell projection. The protein localises to the cilium. It localises to the flagellum. This chain is Photoactivated adenylate cyclase subunit alpha-like protein ST-, found in Euglena gracilis.